Here is a 268-residue protein sequence, read N- to C-terminus: Energy-coupling factor transporter transmembrane protein EcfT (268 aa).

Helical transmembrane passes span 26–46, 47–67, 73–93, 116–136, 151–171, and 246–266; these read ILAV…LSYG, ILIG…GLLL, LWII…GEAL, LVLL…IVLT, VPAH…PTLL, and ALTG…RWGI.

Belongs to the energy-coupling factor EcfT family. In terms of assembly, forms a stable energy-coupling factor (ECF) transporter complex composed of 2 membrane-embedded substrate-binding proteins (S component), 2 ATP-binding proteins (A component) and 2 transmembrane proteins (T component). May be able to interact with more than 1 S component at a time.

It is found in the cell membrane. Transmembrane (T) component of an energy-coupling factor (ECF) ABC-transporter complex. Unlike classic ABC transporters this ECF transporter provides the energy necessary to transport a number of different substrates. This is Energy-coupling factor transporter transmembrane protein EcfT from Acidaminococcus fermentans (strain ATCC 25085 / DSM 20731 / CCUG 9996 / CIP 106432 / VR4).